We begin with the raw amino-acid sequence, 367 residues long: GTP cyclohydrolase FolE2 (367 aa).

This sequence belongs to the GTP cyclohydrolase IV family.

It catalyses the reaction GTP + H2O = 7,8-dihydroneopterin 3'-triphosphate + formate + H(+). It participates in cofactor biosynthesis; 7,8-dihydroneopterin triphosphate biosynthesis; 7,8-dihydroneopterin triphosphate from GTP: step 1/1. Converts GTP to 7,8-dihydroneopterin triphosphate. The protein is GTP cyclohydrolase FolE2 of Ruegeria pomeroyi (strain ATCC 700808 / DSM 15171 / DSS-3) (Silicibacter pomeroyi).